A 46-amino-acid polypeptide reads, in one-letter code: Hellethionin-D (46 aa).

4 disulfide bridges follow: Cys-3–Cys-40, Cys-4–Cys-32, Cys-12–Cys-30, and Cys-16–Cys-26.

It belongs to the plant thionin (TC 1.C.44) family. 4 C-C subfamily.

The protein localises to the secreted. Its function is as follows. Thionins are small plant proteins which are toxic to animal cells. They seem to exert their toxic effect at the level of the cell membrane. Their precise function is not known. This is Hellethionin-D from Helleborus purpurascens (Purple hellebore).